The primary structure comprises 310 residues: Syntaxin-81 (310 aa).

The Cytoplasmic segment spans residues 1-289; sequence MSRFRDRTED…QAIQRNSSSR (289 aa). The stretch at 77-114 forms a coiled coil; it reads RTTEQEKDSIEQEVAAFIKACKEQIDILINSIRNEEAN. The helical; Anchor for type IV membrane protein transmembrane segment at 290–310 threads the bilayer; that stretch reads TFLLLFFFVLTFSVLFLDWYS.

The protein belongs to the syntaxin family. In terms of assembly, part of the t-SNARE complex. Interacts with MAG2.

It localises to the membrane. Functionally, vesicle trafficking protein that functions in the secretory pathway. The sequence is that of Syntaxin-81 (SYP81) from Arabidopsis thaliana (Mouse-ear cress).